Consider the following 479-residue polypeptide: Dynein regulatory complex subunit 4 (479 aa).

Coiled-coil stretches lie at residues 28–93, 117–170, and 210–347; these read RDQL…LADI, RAEA…FNEK, and EVEE…GLKE.

The protein belongs to the DRC4 family.

It localises to the cytoplasm. The protein resides in the cytoskeleton. The protein localises to the flagellum basal body. In terms of biological role, cytoskeletal linker which probably functions in axonemal and non-axonemal dynein regulation. May play a role in the spermatozoa motility. This chain is Dynein regulatory complex subunit 4, found in Drosophila melanogaster (Fruit fly).